A 1254-amino-acid chain; its full sequence is DNA-directed RNA polymerase subunit beta (1254 aa).

This sequence belongs to the RNA polymerase beta chain family. As to quaternary structure, the RNAP catalytic core consists of 2 alpha, 1 beta, 1 beta' and 1 omega subunit. When a sigma factor is associated with the core the holoenzyme is formed, which can initiate transcription.

It catalyses the reaction RNA(n) + a ribonucleoside 5'-triphosphate = RNA(n+1) + diphosphate. In terms of biological role, DNA-dependent RNA polymerase catalyzes the transcription of DNA into RNA using the four ribonucleoside triphosphates as substrates. The sequence is that of DNA-directed RNA polymerase subunit beta from Protochlamydia amoebophila (strain UWE25).